The following is a 432-amino-acid chain: Adenylosuccinate synthetase (432 aa).

GTP is bound by residues 13–19 (GDEGKGK) and 41–43 (GHT). Asp-14 serves as the catalytic Proton acceptor. Mg(2+) is bound by residues Asp-14 and Gly-41. Residues 14-17 (DEGK), 39-42 (NAGH), Thr-130, Arg-144, Gln-225, Thr-240, and Arg-304 contribute to the IMP site. His-42 serves as the catalytic Proton donor. Substrate is bound at residue 300–306 (AVTGRPR). GTP contacts are provided by residues Arg-306, 332–334 (KLD), and 415–417 (STG).

Belongs to the adenylosuccinate synthetase family. In terms of assembly, homodimer. It depends on Mg(2+) as a cofactor.

It localises to the cytoplasm. The enzyme catalyses IMP + L-aspartate + GTP = N(6)-(1,2-dicarboxyethyl)-AMP + GDP + phosphate + 2 H(+). It participates in purine metabolism; AMP biosynthesis via de novo pathway; AMP from IMP: step 1/2. Its function is as follows. Plays an important role in the de novo pathway of purine nucleotide biosynthesis. Catalyzes the first committed step in the biosynthesis of AMP from IMP. This is Adenylosuccinate synthetase from Actinobacillus pleuropneumoniae serotype 5b (strain L20).